The sequence spans 290 residues: uncharacterized protein (290 aa).

The next 5 membrane-spanning stretches (helical) occupy residues 14 to 34 (ALLN…IGIL), 82 to 102 (ISSL…LIGG), 115 to 135 (NLIA…IYLY), 158 to 174 (DAFV…SSQL), and 176 to 196 (LPWV…KTAW).

Belongs to the cation diffusion facilitator (CDF) transporter (TC 2.A.4) family.

The protein resides in the cell membrane. This is an uncharacterized protein from Bacillus subtilis (strain 168).